A 201-amino-acid polypeptide reads, in one-letter code: UPF0301 protein MMAR_0053 (201 aa).

It belongs to the UPF0301 (AlgH) family.

The sequence is that of UPF0301 protein MMAR_0053 from Mycobacterium marinum (strain ATCC BAA-535 / M).